The following is a 228-amino-acid chain: ATP synthase F(0) complex subunit a (228 aa).

6 consecutive transmembrane segments (helical) span residues 13 to 33 (YFLG…TMFI), 70 to 90 (WALL…TGLL), 100 to 120 (LSLN…MGAT), 140 to 160 (APFL…ALGV), 162 to 182 (LTAN…ALIN), and 190 to 210 (LFLT…VSFI).

This sequence belongs to the ATPase A chain family. As to quaternary structure, component of the ATP synthase complex composed at least of ATP5F1A/subunit alpha, ATP5F1B/subunit beta, ATP5MC1/subunit c (homooctomer), MT-ATP6/subunit a, MT-ATP8/subunit 8, ATP5ME/subunit e, ATP5MF/subunit f, ATP5MG/subunit g, ATP5MK/subunit k, ATP5MJ/subunit j, ATP5F1C/subunit gamma, ATP5F1D/subunit delta, ATP5F1E/subunit epsilon, ATP5PF/subunit F6, ATP5PB/subunit b, ATP5PD/subunit d, ATP5PO/subunit OSCP. ATP synthase complex consists of a soluble F(1) head domain (subunits alpha(3) and beta(3)) - the catalytic core - and a membrane F(0) domain - the membrane proton channel (subunits c, a, 8, e, f, g, k and j). These two domains are linked by a central stalk (subunits gamma, delta, and epsilon) rotating inside the F1 region and a stationary peripheral stalk (subunits F6, b, d, and OSCP). Interacts with DNAJC30; interaction is direct.

It is found in the mitochondrion inner membrane. It carries out the reaction H(+)(in) = H(+)(out). Subunit a, of the mitochondrial membrane ATP synthase complex (F(1)F(0) ATP synthase or Complex V) that produces ATP from ADP in the presence of a proton gradient across the membrane which is generated by electron transport complexes of the respiratory chain. ATP synthase complex consist of a soluble F(1) head domain - the catalytic core - and a membrane F(1) domain - the membrane proton channel. These two domains are linked by a central stalk rotating inside the F(1) region and a stationary peripheral stalk. During catalysis, ATP synthesis in the catalytic domain of F(1) is coupled via a rotary mechanism of the central stalk subunits to proton translocation. With the subunit c (ATP5MC1), forms the proton-conducting channel in the F(0) domain, that contains two crucial half-channels (inlet and outlet) that facilitate proton movement from the mitochondrial intermembrane space (IMS) into the matrix. Protons are taken up via the inlet half-channel and released through the outlet half-channel, following a Grotthuss mechanism. The protein is ATP synthase F(0) complex subunit a of Myxine glutinosa (Atlantic hagfish).